The following is a 187-amino-acid chain: Ribose 1,5-bisphosphate phosphokinase PhnN (187 aa).

ATP is bound at residue 9–16 (GPSGSGKD).

This sequence belongs to the ribose 1,5-bisphosphokinase family.

The enzyme catalyses alpha-D-ribose 1,5-bisphosphate + ATP = 5-phospho-alpha-D-ribose 1-diphosphate + ADP. Its pathway is metabolic intermediate biosynthesis; 5-phospho-alpha-D-ribose 1-diphosphate biosynthesis; 5-phospho-alpha-D-ribose 1-diphosphate from D-ribose 5-phosphate (route II): step 3/3. Functionally, catalyzes the phosphorylation of ribose 1,5-bisphosphate to 5-phospho-D-ribosyl alpha-1-diphosphate (PRPP). This chain is Ribose 1,5-bisphosphate phosphokinase PhnN, found in Desulfomicrobium baculatum (strain DSM 4028 / VKM B-1378 / X) (Desulfovibrio baculatus).